Here is a 232-residue protein sequence, read N- to C-terminus: Ubiquinone biosynthesis O-methyltransferase (232 aa).

Residues arginine 36, glycine 55, aspartate 76, and leucine 120 each contribute to the S-adenosyl-L-methionine site.

This sequence belongs to the methyltransferase superfamily. UbiG/COQ3 family.

It carries out the reaction a 3-demethylubiquinol + S-adenosyl-L-methionine = a ubiquinol + S-adenosyl-L-homocysteine + H(+). It catalyses the reaction a 3-(all-trans-polyprenyl)benzene-1,2-diol + S-adenosyl-L-methionine = a 2-methoxy-6-(all-trans-polyprenyl)phenol + S-adenosyl-L-homocysteine + H(+). The protein operates within cofactor biosynthesis; ubiquinone biosynthesis. O-methyltransferase that catalyzes the 2 O-methylation steps in the ubiquinone biosynthetic pathway. This Pseudomonas fluorescens (strain SBW25) protein is Ubiquinone biosynthesis O-methyltransferase.